The following is an 83-amino-acid chain: Putative snRNP Sm-like protein (83 aa).

A Sm domain is found at 9-81 (KPMDVLKNAL…VIFVSPSKGD (73 aa)).

This sequence belongs to the snRNP Sm proteins family.

This Thermoplasma volcanium (strain ATCC 51530 / DSM 4299 / JCM 9571 / NBRC 15438 / GSS1) protein is Putative snRNP Sm-like protein.